A 124-amino-acid chain; its full sequence is Ribonuclease pancreatic (124 aa).

The segment covering 1 to 13 has biased composition (basic and acidic residues); sequence KESAAAKFERQHM. The disordered stretch occupies residues 1–24; that stretch reads KESAAAKFERQHMDSSTSSASSSN. Residues lysine 7 and arginine 10 each coordinate substrate. Histidine 12 serves as the catalytic Proton acceptor. Disulfide bonds link cysteine 26/cysteine 84, cysteine 40/cysteine 95, cysteine 58/cysteine 110, and cysteine 65/cysteine 72. Asparagine 34 carries N-linked (GlcNAc...) asparagine; partial glycosylation. Substrate is bound by residues 41–45, lysine 66, and arginine 85; that span reads KPVNT. Histidine 119 functions as the Proton donor in the catalytic mechanism.

Belongs to the pancreatic ribonuclease family. In terms of assembly, monomer. Interacts with and forms tight 1:1 complexes with RNH1. Dimerization of two such complexes may occur. Interaction with RNH1 inhibits this protein. In terms of tissue distribution, pancreas.

It is found in the secreted. It catalyses the reaction an [RNA] containing cytidine + H2O = an [RNA]-3'-cytidine-3'-phosphate + a 5'-hydroxy-ribonucleotide-3'-[RNA].. The catalysed reaction is an [RNA] containing uridine + H2O = an [RNA]-3'-uridine-3'-phosphate + a 5'-hydroxy-ribonucleotide-3'-[RNA].. Endonuclease that catalyzes the cleavage of RNA on the 3' side of pyrimidine nucleotides. Acts on single-stranded and double-stranded RNA. In Aepyceros melampus (Impala), this protein is Ribonuclease pancreatic (RNASE1).